The following is a 140-amino-acid chain: Nucleoside diphosphate kinase (140 aa).

ATP-binding residues include Lys-11, Phe-59, Arg-87, Thr-93, Arg-104, and Asn-114. The Pros-phosphohistidine intermediate role is filled by His-117.

This sequence belongs to the NDK family. In terms of assembly, homotetramer. The cofactor is Mg(2+).

The protein localises to the cytoplasm. It carries out the reaction a 2'-deoxyribonucleoside 5'-diphosphate + ATP = a 2'-deoxyribonucleoside 5'-triphosphate + ADP. It catalyses the reaction a ribonucleoside 5'-diphosphate + ATP = a ribonucleoside 5'-triphosphate + ADP. Major role in the synthesis of nucleoside triphosphates other than ATP. The ATP gamma phosphate is transferred to the NDP beta phosphate via a ping-pong mechanism, using a phosphorylated active-site intermediate. The protein is Nucleoside diphosphate kinase of Sinorhizobium medicae (strain WSM419) (Ensifer medicae).